We begin with the raw amino-acid sequence, 358 residues long: Holliday junction branch migration complex subunit RuvB (358 aa).

The segment at 1–183 is large ATPase domain (RuvB-L); the sequence is MAEPSLVSGG…FGFTGHLEFY (183 aa). Residues Leu22, Arg23, Gly64, Lys67, Thr68, Thr69, 130-132, Arg173, Tyr183, and Arg220 each bind ATP; that span reads EDF. A Mg(2+)-binding site is contributed by Thr68. The tract at residues 184–254 is small ATPAse domain (RuvB-S); sequence SVAELELVLR…SASAALDMYE (71 aa). The tract at residues 257 to 358 is head domain (RuvB-H); sequence ERGLDRLDRS…NHAESVDTVG (102 aa). Residues Arg312 and Arg317 each coordinate DNA.

Belongs to the RuvB family. In terms of assembly, homohexamer. Forms an RuvA(8)-RuvB(12)-Holliday junction (HJ) complex. HJ DNA is sandwiched between 2 RuvA tetramers; dsDNA enters through RuvA and exits via RuvB. An RuvB hexamer assembles on each DNA strand where it exits the tetramer. Each RuvB hexamer is contacted by two RuvA subunits (via domain III) on 2 adjacent RuvB subunits; this complex drives branch migration. In the full resolvosome a probable DNA-RuvA(4)-RuvB(12)-RuvC(2) complex forms which resolves the HJ.

Its subcellular location is the cytoplasm. The enzyme catalyses ATP + H2O = ADP + phosphate + H(+). Its function is as follows. The RuvA-RuvB-RuvC complex processes Holliday junction (HJ) DNA during genetic recombination and DNA repair, while the RuvA-RuvB complex plays an important role in the rescue of blocked DNA replication forks via replication fork reversal (RFR). RuvA specifically binds to HJ cruciform DNA, conferring on it an open structure. The RuvB hexamer acts as an ATP-dependent pump, pulling dsDNA into and through the RuvAB complex. RuvB forms 2 homohexamers on either side of HJ DNA bound by 1 or 2 RuvA tetramers; 4 subunits per hexamer contact DNA at a time. Coordinated motions by a converter formed by DNA-disengaged RuvB subunits stimulates ATP hydrolysis and nucleotide exchange. Immobilization of the converter enables RuvB to convert the ATP-contained energy into a lever motion, pulling 2 nucleotides of DNA out of the RuvA tetramer per ATP hydrolyzed, thus driving DNA branch migration. The RuvB motors rotate together with the DNA substrate, which together with the progressing nucleotide cycle form the mechanistic basis for DNA recombination by continuous HJ branch migration. Branch migration allows RuvC to scan DNA until it finds its consensus sequence, where it cleaves and resolves cruciform DNA. The chain is Holliday junction branch migration complex subunit RuvB from Paenarthrobacter aurescens (strain TC1).